The sequence spans 360 residues: Peptide chain release factor 1 (360 aa).

At Q237 the chain carries N5-methylglutamine.

The protein belongs to the prokaryotic/mitochondrial release factor family. In terms of processing, methylated by PrmC. Methylation increases the termination efficiency of RF1.

It localises to the cytoplasm. Its function is as follows. Peptide chain release factor 1 directs the termination of translation in response to the peptide chain termination codons UAG and UAA. The polypeptide is Peptide chain release factor 1 (Pseudomonas putida (strain ATCC 47054 / DSM 6125 / CFBP 8728 / NCIMB 11950 / KT2440)).